The primary structure comprises 327 residues: Zinc transport protein ZntB (327 aa).

The Cytoplasmic segment spans residues 1–273 (MEAIKGSDVN…ARRTYTMSLM (273 aa)). A helical membrane pass occupies residues 274 to 294 (AMVFLPSTFLTGLFGVNLGGI). The Periplasmic segment spans residues 295 to 300 (PGGGWR). The chain crosses the membrane as a helical span at residues 301-321 (FGFSLFCILLVVLIGGVTLWL). Residues 322-327 (HRSKWL) are Cytoplasmic-facing.

Belongs to the CorA metal ion transporter (MIT) (TC 1.A.35) family.

The protein resides in the cell inner membrane. It carries out the reaction Zn(2+)(out) + H(+)(out) = Zn(2+)(in) + H(+)(in). In terms of biological role, zinc transporter. Acts as a Zn(2+):proton symporter, which likely mediates zinc ion uptake. In Salmonella choleraesuis (strain SC-B67), this protein is Zinc transport protein ZntB.